An 817-amino-acid chain; its full sequence is Putative receptor protein kinase ZmPK1 (817 aa).

The first 28 residues, 1-28, serve as a signal peptide directing secretion; the sequence is MPRPLAALLSTACILSFFIALFPRAASS. The Bulb-type lectin domain occupies 29 to 158; the sequence is RDILPLGSSL…GGNTVWQSFD (130 aa). Over 29-472 the chain is Extracellular; that stretch reads RDILPLGSSL…HKTGGGESKW (444 aa). Residues asparagine 83, asparagine 128, asparagine 228, and asparagine 279 are each glycosylated (N-linked (GlcNAc...) asparagine). Positions 292 to 328 constitute an EGF-like domain; it reads MTQPCNIHGLCGPNGICHYSPTPTCSCPPGYATRNPG. Disulfide bonds link cysteine 296-cysteine 308 and cysteine 302-cysteine 316. Residues asparagine 329 and asparagine 339 are each glycosylated (N-linked (GlcNAc...) asparagine). The PAN domain maps to 342–424; that stretch reads CDRYDKRSMR…VRTIYLKLPT (83 aa). Intrachain disulfides connect cysteine 376/cysteine 398 and cysteine 384/cysteine 386. Asparagine 452 carries N-linked (GlcNAc...) asparagine glycosylation. A helical transmembrane segment spans residues 473-498; that stretch reads FYFYGFIAAFFVVEVSFISFAWFFVL. Residues 499–817 are Cytoplasmic-facing; that stretch reads KRELRPSELW…AVQTLLSADD (319 aa). A Protein kinase domain is found at 534-817; it reads RKFKVELGRG…AVQTLLSADD (284 aa). ATP contacts are provided by residues 540-548 and lysine 562; that span reads LGRGESGTV. Aspartate 658 (proton acceptor) is an active-site residue.

This sequence belongs to the protein kinase superfamily. Ser/Thr protein kinase family. Expressed predominantly in the shoots and roots of young maize seedlings, and to a lesser extent in the silks.

It localises to the membrane. The enzyme catalyses L-seryl-[protein] + ATP = O-phospho-L-seryl-[protein] + ADP + H(+). It catalyses the reaction L-threonyl-[protein] + ATP = O-phospho-L-threonyl-[protein] + ADP + H(+). Its function is as follows. Probable receptor. Interaction with a ligand in the extracellular domain triggers the protein kinase activity of the cytoplasmic domain. The chain is Putative receptor protein kinase ZmPK1 (PK1) from Zea mays (Maize).